A 155-amino-acid polypeptide reads, in one-letter code: uncharacterized protein (155 aa).

Positions 6-155 (LRIELGEETN…RDMVRLYLDL (150 aa)) constitute an N-acetyltransferase domain. CoA contacts are provided by residues 69 to 71 (IAV), 77 to 82 (KKGFGK), and 111 to 117 (QLSLYQK).

In terms of biological role, probable N-acetyltransferase. This is an uncharacterized protein from Bacillus subtilis (strain 168).